Reading from the N-terminus, the 245-residue chain is 1-(5-phosphoribosyl)-5-[(5-phosphoribosylamino)methylideneamino] imidazole-4-carboxamide isomerase (245 aa).

D8 acts as the Proton acceptor in catalysis. D129 (proton donor) is an active-site residue.

Belongs to the HisA/HisF family.

Its subcellular location is the cytoplasm. It carries out the reaction 1-(5-phospho-beta-D-ribosyl)-5-[(5-phospho-beta-D-ribosylamino)methylideneamino]imidazole-4-carboxamide = 5-[(5-phospho-1-deoxy-D-ribulos-1-ylimino)methylamino]-1-(5-phospho-beta-D-ribosyl)imidazole-4-carboxamide. The protein operates within amino-acid biosynthesis; L-histidine biosynthesis; L-histidine from 5-phospho-alpha-D-ribose 1-diphosphate: step 4/9. This chain is 1-(5-phosphoribosyl)-5-[(5-phosphoribosylamino)methylideneamino] imidazole-4-carboxamide isomerase, found in Trichlorobacter lovleyi (strain ATCC BAA-1151 / DSM 17278 / SZ) (Geobacter lovleyi).